We begin with the raw amino-acid sequence, 319 residues long: Acetyl-coenzyme A carboxylase carboxyl transferase subunit alpha (319 aa).

In terms of domain architecture, CoA carboxyltransferase C-terminal spans 35–296 (NLDEEVQRLR…KAQLLADLSD (262 aa)).

It belongs to the AccA family. As to quaternary structure, acetyl-CoA carboxylase is a heterohexamer composed of biotin carboxyl carrier protein (AccB), biotin carboxylase (AccC) and two subunits each of ACCase subunit alpha (AccA) and ACCase subunit beta (AccD).

It is found in the cytoplasm. It carries out the reaction N(6)-carboxybiotinyl-L-lysyl-[protein] + acetyl-CoA = N(6)-biotinyl-L-lysyl-[protein] + malonyl-CoA. It participates in lipid metabolism; malonyl-CoA biosynthesis; malonyl-CoA from acetyl-CoA: step 1/1. Its function is as follows. Component of the acetyl coenzyme A carboxylase (ACC) complex. First, biotin carboxylase catalyzes the carboxylation of biotin on its carrier protein (BCCP) and then the CO(2) group is transferred by the carboxyltransferase to acetyl-CoA to form malonyl-CoA. In Yersinia enterocolitica serotype O:8 / biotype 1B (strain NCTC 13174 / 8081), this protein is Acetyl-coenzyme A carboxylase carboxyl transferase subunit alpha.